A 193-amino-acid chain; its full sequence is Cytidylate kinase (193 aa).

12–20 serves as a coordination point for ATP; sequence GLPGSGTTT.

This sequence belongs to the cytidylate kinase family. Type 2 subfamily.

Its subcellular location is the cytoplasm. The catalysed reaction is CMP + ATP = CDP + ADP. It catalyses the reaction dCMP + ATP = dCDP + ADP. The sequence is that of Cytidylate kinase from Methanopyrus kandleri (strain AV19 / DSM 6324 / JCM 9639 / NBRC 100938).